Here is a 756-residue protein sequence, read N- to C-terminus: MLIHEDNRYIVEKEYNLVTEPQNASLFTTGNGYMGVRGSLEEFGSTRIQGSFIRGFVDEIIEVIEPFCDNEYMKKYYFDEEKLKKFDKQISCINLVDFLLIRFRIGDEIFYPWEGEILSWERRLDTSQSIFQRSVTWKDKMGNITVFEFERFASYDEEHRYCMRAMAKPQNHFLPVEIISGIDTDVRTGGQRVLQFINNQILNNGLISCFQSGKRYGITCKIAVKNSFFMDGKLQHSIGEQQENLLLNKALMPGGGREYCVEKTIYLTTDRDCDPLFDTIDTVLLDVGTYDAYKEAHIREWSQFFSNFDIKILGDDRKDAQLRFATYHAVITGDRNNSIHSLSAKGLTGERYNQFVWWDCEIYQLPIFIHAFPEVAKHALIYRYDRLEEARENAKLEGCKGARYPFVSSLEGKEHVWIYARHPFLQVHITADIGFGIINYFINTLDYEFMELYGFEMLYEICRYWVSKVILKDGTYQLLGVTGTDEHHPYVDNDAYTNYIVQYVLQETILLDSQYSSTKVRDKIGITVNELKDIEQVSRLLYLPLEKSGLIPQFDGYFDLSRDLEVDGSGTGKNFQMKQAGLYHKSQVIKQPDVMLLFSYLNFEIKNSRYEENWDYYEKMCESSSSLTFPVHAICSADANRMLSFLNYFNETVNIDLLDIHHCAWQGVHAGCLSGAWYAIFRGLMGIVTRIDCIQINPKLIPFWQGVELSFIYQTKKIKATLNGNVFTLGSEDKKEISVYFQGKRYAFVDRLEVSF.

358-359 is a binding site for substrate; sequence WD. E486 (proton donor) is an active-site residue. Residue 590–591 coordinates substrate; the sequence is KQ.

It belongs to the glycosyl hydrolase 65 family. As to quaternary structure, monomer.

It is found in the cytoplasm. It carries out the reaction 3-O-alpha-D-glucosyl-L-rhamnose + phosphate = beta-D-glucose 1-phosphate + L-rhamnopyranose. Its function is as follows. Phosphorylase showing strict alpha-1,3-regioselectivity and producing 3-O-alpha-D-glucopyranosyl-L-rhamnopyranose. Specific for L-rhamnose as acceptor and beta-D-glucose 1-phosphate as donor. Does not phosphorylate alpha,alpha-trehalose, kojibiose, nigerose, or maltose. This chain is 3-O-alpha-D-glucosyl-L-rhamnose phosphorylase, found in Lachnoclostridium phytofermentans (strain ATCC 700394 / DSM 18823 / ISDg) (Clostridium phytofermentans).